Here is a 489-residue protein sequence, read N- to C-terminus: uncharacterized protein (489 aa).

Transmembrane regions (helical) follow at residues 1-21 (MNAA…LGIR), 40-60 (FGTV…FTFL), 74-94 (FYII…LPAV), 117-137 (PLLG…YLVL), 158-178 (AAIW…GIHG), 188-208 (IMIL…YYGG), 234-254 (AWFS…PHTF), 271-291 (IIMP…FAAI), 318-338 (FVGI…SMIL), 362-382 (VSAL…YFTF), 388-408 (IVTL…ALLF), 422-442 (FAGI…ETTI), and 456-476 (LNVG…VSLM).

Belongs to the sodium:solute symporter (SSF) (TC 2.A.21) family.

Its subcellular location is the cell membrane. This is an uncharacterized protein from Bacillus subtilis (strain 168).